Here is a 120-residue protein sequence, read N- to C-terminus: uncharacterized protein (120 aa).

To E.coli YiaW.

This is an uncharacterized protein from Escherichia coli (strain K12).